Reading from the N-terminus, the 361-residue chain is Beta-hexosaminidase (361 aa).

Residues D69, R77, R144, and 174 to 175 (KH) each bind substrate. Residue H187 is the Proton donor/acceptor of the active site. D258 acts as the Nucleophile in catalysis.

It belongs to the glycosyl hydrolase 3 family. NagZ subfamily.

The protein localises to the cytoplasm. The enzyme catalyses Hydrolysis of terminal non-reducing N-acetyl-D-hexosamine residues in N-acetyl-beta-D-hexosaminides.. Its pathway is cell wall biogenesis; peptidoglycan recycling. Plays a role in peptidoglycan recycling by cleaving the terminal beta-1,4-linked N-acetylglucosamine (GlcNAc) from peptide-linked peptidoglycan fragments, giving rise to free GlcNAc, anhydro-N-acetylmuramic acid and anhydro-N-acetylmuramic acid-linked peptides. This Neisseria gonorrhoeae (strain NCCP11945) protein is Beta-hexosaminidase.